A 237-amino-acid polypeptide reads, in one-letter code: uncharacterized protein (237 aa).

A signal peptide spans 1–28; it reads MVFSFSTFNRLVTFTVMAAIVSVRPLTA.

This is an uncharacterized protein from Sinorhizobium fredii (strain NBRC 101917 / NGR234).